The primary structure comprises 227 residues: Translation initiation factor 6 (227 aa).

This sequence belongs to the eIF-6 family.

Binds to the 50S ribosomal subunit and prevents its association with the 30S ribosomal subunit to form the 70S initiation complex. In Methanococcus maripaludis (strain DSM 14266 / JCM 13030 / NBRC 101832 / S2 / LL), this protein is Translation initiation factor 6.